Here is a 457-residue protein sequence, read N- to C-terminus: MALWGGRFTQAADQRFKQFNDSLRFDYRLAEQDIVGSVAWSKALVTVGVLTAEEQAQLEEALSVLLEDVRARPQQILESDAEDIHSWVEGKLIDKVGQLGKKLHTGRSRNDQVATDLKLWCKDTVSELLTANRQLQSALVETAQNNQDAVMPGYTHLQRAQPVTFAHWCLAYVEMLARDESRLQDALKRLDVSPLGCGALAGTAYEIDREQLAGWLGFASATRNSLDSVSDRDHVLELLSAAAIGMVHLSRFAEDLIFFNTGEAGFVELSDRVTSGSSLMPQKKNPDALELIRGKCGRVQGALTGMMMTLKGLPLAYNKDMQEDKEGLFDALDTWLDCLHMAALVLDGIQVKRPRCQEAAQQGYANATELADYLVAKGVPFREAHHIVGEAVVEAIRQGKPLEDLPLDELQKFSPVIGEDVYPILSLQSCLDKRAAKGGVSPQQVAQAIAFAQARLG.

Belongs to the lyase 1 family. Argininosuccinate lyase subfamily.

It is found in the cytoplasm. It carries out the reaction 2-(N(omega)-L-arginino)succinate = fumarate + L-arginine. It functions in the pathway amino-acid biosynthesis; L-arginine biosynthesis; L-arginine from L-ornithine and carbamoyl phosphate: step 3/3. This Shigella sonnei (strain Ss046) protein is Argininosuccinate lyase.